Consider the following 429-residue polypeptide: Serine--tRNA ligase (429 aa).

236–238 contacts L-serine; it reads TGE. Position 267 to 269 (267 to 269) interacts with ATP; that stretch reads RSE. Residue Glu290 participates in L-serine binding. 354-357 lines the ATP pocket; that stretch reads EISS. Position 390 (Ser390) interacts with L-serine.

It belongs to the class-II aminoacyl-tRNA synthetase family. Type-1 seryl-tRNA synthetase subfamily. In terms of assembly, homodimer. The tRNA molecule binds across the dimer.

The protein resides in the cytoplasm. The enzyme catalyses tRNA(Ser) + L-serine + ATP = L-seryl-tRNA(Ser) + AMP + diphosphate + H(+). It catalyses the reaction tRNA(Sec) + L-serine + ATP = L-seryl-tRNA(Sec) + AMP + diphosphate + H(+). Its pathway is aminoacyl-tRNA biosynthesis; selenocysteinyl-tRNA(Sec) biosynthesis; L-seryl-tRNA(Sec) from L-serine and tRNA(Sec): step 1/1. In terms of biological role, catalyzes the attachment of serine to tRNA(Ser). Is also able to aminoacylate tRNA(Sec) with serine, to form the misacylated tRNA L-seryl-tRNA(Sec), which will be further converted into selenocysteinyl-tRNA(Sec). In Vesicomyosocius okutanii subsp. Calyptogena okutanii (strain HA), this protein is Serine--tRNA ligase.